A 631-amino-acid polypeptide reads, in one-letter code: Protein FRIABLE 1 (631 aa).

A compositionally biased stretch (low complexity) spans 1–13; the sequence is MSVGVPVNPSSSS. A disordered region spans residues 1-36; sequence MSVGVPVNPSSSSQLPAAPTTTTRRRVADSQEDHSH. Residues 1–120 lie on the Cytoplasmic side of the membrane; sequence MSVGVPVNPS…NMRSTTNLGR (120 aa). A compositionally biased stretch (basic and acidic residues) spans 26–36; it reads RVADSQEDHSH. Residues 121-141 traverse the membrane as a helical; Signal-anchor for type II membrane protein segment; sequence FILTLLSILVVTFFLIVALSG. Residues 142–631 lie on the Lumenal side of the membrane; that stretch reads GVGRRRKHVE…RPSLRAQSLR (490 aa). N-linked (GlcNAc...) asparagine glycans are attached at residues asparagine 246, asparagine 329, and asparagine 364. Residue 384–386 participates in substrate binding; the sequence is HLR. N-linked (GlcNAc...) asparagine glycans are attached at residues asparagine 398 and asparagine 425.

It belongs to the glycosyltransferase GT106 family. Ubiquitous. Strong expression in young seedlings, particularly at the junction between hypocotyl and root, in emerging cotyledons, and in parts of the roots. Also detected in the inflorescence (sepals, petals, mature pollen and siliques) and rosette leaves.

The protein resides in the golgi apparatus membrane. Its pathway is glycan metabolism. Its function is as follows. Glycosyltransferase required for normal cell adhesion and cell wall integrity. The chain is Protein FRIABLE 1 from Arabidopsis thaliana (Mouse-ear cress).